The primary structure comprises 469 residues: Glutamine synthetase (469 aa).

Positions 14–99 (NDVKFVDLRF…FCDILDPVSG (86 aa)) constitute a GS beta-grasp domain. The GS catalytic domain occupies 106–469 (PRGTAKKAEA…PVEFDMYYSV (364 aa)). Glu131 and Glu133 together coordinate Mg(2+). An ATP-binding site is contributed by Glu209. Positions 214 and 221 each coordinate Mg(2+). L-glutamate contacts are provided by residues 265–266 (NG) and Gly266. Mg(2+) is bound at residue His270. ATP is bound by residues 272 to 274 (HLS) and Ser274. Arg322, Glu328, and Arg340 together coordinate L-glutamate. ATP-binding residues include Arg340, Arg345, and Lys353. Glu358 is a binding site for Mg(2+). Arg360 is a binding site for L-glutamate. An O-AMP-tyrosine modification is found at Tyr398.

The protein belongs to the glutamine synthetase family. In terms of assembly, oligomer of 12 subunits arranged in the form of two hexameric ring. The cofactor is Mg(2+).

It localises to the cytoplasm. It carries out the reaction L-glutamate + NH4(+) + ATP = L-glutamine + ADP + phosphate + H(+). With respect to regulation, the activity of this enzyme could be controlled by adenylation under conditions of abundant glutamine. Functionally, catalyzes the ATP-dependent biosynthesis of glutamine from glutamate and ammonia. The chain is Glutamine synthetase from Rhizobium meliloti (strain 1021) (Ensifer meliloti).